Reading from the N-terminus, the 643-residue chain is 1-deoxy-D-xylulose-5-phosphate synthase (643 aa).

Residues H78 and 119–121 (AHS) contribute to the thiamine diphosphate site. A Mg(2+)-binding site is contributed by D150. Thiamine diphosphate-binding positions include 151–152 (GS), N179, Y288, and E370. Position 179 (N179) interacts with Mg(2+).

Belongs to the transketolase family. DXPS subfamily. As to quaternary structure, homodimer. Mg(2+) is required as a cofactor. The cofactor is thiamine diphosphate.

It carries out the reaction D-glyceraldehyde 3-phosphate + pyruvate + H(+) = 1-deoxy-D-xylulose 5-phosphate + CO2. Its pathway is metabolic intermediate biosynthesis; 1-deoxy-D-xylulose 5-phosphate biosynthesis; 1-deoxy-D-xylulose 5-phosphate from D-glyceraldehyde 3-phosphate and pyruvate: step 1/1. In terms of biological role, catalyzes the acyloin condensation reaction between C atoms 2 and 3 of pyruvate and glyceraldehyde 3-phosphate to yield 1-deoxy-D-xylulose-5-phosphate (DXP). This Brucella abortus (strain 2308) protein is 1-deoxy-D-xylulose-5-phosphate synthase.